A 506-amino-acid polypeptide reads, in one-letter code: Protein MGF 505-4R (506 aa).

This sequence belongs to the asfivirus MGF 505 family.

Its function is as follows. Plays a role in virus cell tropism, and may be required for efficient virus replication in macrophages. In Ornithodoros (relapsing fever ticks), this protein is Protein MGF 505-4R.